A 473-amino-acid chain; its full sequence is Zinc finger and BTB domain-containing protein 9 (473 aa).

Residues 48–112 enclose the BTB domain; that stretch reads CDVSLLVQGR…IYSGRLRLPL (65 aa). The interval 177–279 is disordered; the sequence is QTPVQSSAST…LELPAPPALP (103 aa). Over residues 182 to 196 the composition is skewed to low complexity; it reads SSASTESPASTESPV. Residues 211-226 show a composition bias toward acidic residues; that stretch reads VEEEEEEEEDDDDEDQ. Over residues 227 to 239 the composition is skewed to polar residues; the sequence is GSATLSQTPQPQR. Residue lysine 286 forms a Glycyl lysine isopeptide (Lys-Gly) (interchain with G-Cter in SUMO1); alternate linkage. A Glycyl lysine isopeptide (Lys-Gly) (interchain with G-Cter in SUMO2); alternate cross-link involves residue lysine 286. Residues lysine 293 and lysine 307 each participate in a glycyl lysine isopeptide (Lys-Gly) (interchain with G-Cter in SUMO2) cross-link. The interval 293–376 is disordered; sequence KEEISGSGTQ…VHGPVKLGGT (84 aa). The segment covering 355–364 has biased composition (gly residues); that stretch reads SGGGGPGGAG. Residue lysine 382 forms a Glycyl lysine isopeptide (Lys-Gly) (interchain with G-Cter in SUMO2) linkage. The segment at 411-433 adopts a C2H2-type 1 zinc-finger fold; it reads FGCGICNKRFKLKHHLTEHMKTH. The segment at 438-460 adopts a C2H2-type 2; atypical zinc-finger fold; it reads HACPHCGRRFRVHACFLRHRDLC.

Its subcellular location is the nucleus. Functionally, may be involved in transcriptional regulation. This is Zinc finger and BTB domain-containing protein 9 (ZBTB9) from Homo sapiens (Human).